The following is a 549-amino-acid chain: MLNQKIQNPNPDELMIEVDLCYELDPYELKLDEMIEAEPEPEMIEGLPASDALTPADRYLELFEHVQSEKIFPDSKTFPDCAPKMDPLDILIRYRKVRRHRDFDLRKFVENHFWLPEVYSSEYVSDPQNSLKEHIDQLWPVLTREPQDHIPWSSLLALPQSYIVPGGRFSETYYWDSYFTMLGLAESGREDLLKCMADNFAWMIENYGHIPNGNRTYYLSRSQPPVFALMVELFEEDGVRGARRYLDHLKMEYAFWMDGAESLIPNQAYRHVVRMPDGSLLNRYWDDRDTPRDESWLEDVETAKHSGRPPNEVYRDLRAGAASGWDYSSRWLRDTGRLASIRTTQFIPIDLNAFLFKLESAIANISALKGEKETEALFRQKASARRDAVNRYLWDDENGIYRDYDWRREQLALFSAAAIVPLYVGMANHEQADRLANAVRSRLLTPGGILASEYETGEQWDKPNGWAPLQWMAIQGFKMYGDDLLGDEIARNWLKTVNQFYLEQHKLIEKYHIADGVPREGGGGEYPLQDGFGWTNGVVRRLIGLYGEP.

Substrate-binding positions include arginine 168, 175–176 (WD), asparagine 212, 221–223 (RSQ), 292–294 (RDE), and glycine 324. Residues aspartate 326 and glutamate 509 each act as proton donor/acceptor in the active site. Glutamate 525 is a substrate binding site.

The protein belongs to the glycosyl hydrolase 37 family. As to quaternary structure, monomer.

The protein localises to the cytoplasm. The catalysed reaction is alpha,alpha-trehalose + H2O = alpha-D-glucose + beta-D-glucose. Its pathway is glycan degradation; trehalose degradation; D-glucose from alpha,alpha-trehalose: step 1/1. Hydrolyzes trehalose to glucose. Could be involved, in cells returning to low osmolarity conditions, in the utilization of the accumulated cytoplasmic trehalose, which was synthesized in response to high osmolarity. The polypeptide is Cytoplasmic trehalase (Escherichia coli O81 (strain ED1a)).